A 433-amino-acid polypeptide reads, in one-letter code: Ornithine decarboxylase, chloroplastic (433 aa).

The residue at position 96 (Lys-96) is an N6-(pyridoxal phosphate)lysine. Pyridoxal 5'-phosphate-binding positions include Ser-228, Gly-266, and 299–302 (EPGR). Residue 342-343 (YD) coordinates substrate. The Proton donor; shared with dimeric partner role is filled by Cys-378. A substrate-binding site is contributed by Asp-379. Tyr-407 serves as a coordination point for pyridoxal 5'-phosphate.

It belongs to the Orn/Lys/Arg decarboxylase class-II family. As to quaternary structure, homodimer. Only the dimer is catalytically active, as the active sites are constructed of residues from both monomers. The cofactor is pyridoxal 5'-phosphate.

It localises to the plastid. Its subcellular location is the chloroplast. The enzyme catalyses L-ornithine + H(+) = putrescine + CO2. Its pathway is alkaloid biosynthesis; nicotine biosynthesis. It functions in the pathway amine and polyamine biosynthesis; putrescine biosynthesis via L-ornithine pathway; putrescine from L-ornithine: step 1/1. In terms of biological role, involved in the biosynthesis of pyridine alkaloid natural products, leading mainly to the production of anabasine, anatabine, nicotine and nornicotine, effective deterrents against herbivores with antiparasitic and pesticide properties (neurotoxins); nornicotine serves as the precursor in the synthesis of the carcinogen compound N'-nitrosonornicotine (NNN). Catalyzes the first and rate-limiting step of polyamine biosynthesis that converts ornithine into putrescine, which is the precursor for the polyamines, spermidine and spermine. Polyamines are essential for cell proliferation and are implicated in cellular processes, ranging from DNA replication to apoptosis. The sequence is that of Ornithine decarboxylase, chloroplastic from Nicotiana glauca (Glaucous tobacco).